A 389-amino-acid polypeptide reads, in one-letter code: 26S proteasome regulatory subunit 10B (389 aa).

Lysine 72 carries the post-translational modification N6-acetyllysine. 174–181 contacts ATP; that stretch reads GPPGTGKT. Lysine 206 is modified (N6-acetyllysine). Serine 244 carries the post-translational modification Phosphoserine.

It belongs to the AAA ATPase family. As to quaternary structure, component of the 19S proteasome regulatory particle complex. The 26S proteasome consists of a 20S core particle (CP) and two 19S regulatory subunits (RP). The regulatory particle is made of a lid composed of 9 subunits, a base containing 6 ATPases including PSMC6 and few additional components. Interacts with PAAF1.

It is found in the cytoplasm. It localises to the nucleus. Functionally, component of the 26S proteasome, a multiprotein complex involved in the ATP-dependent degradation of ubiquitinated proteins. This complex plays a key role in the maintenance of protein homeostasis by removing misfolded or damaged proteins, which could impair cellular functions, and by removing proteins whose functions are no longer required. Therefore, the proteasome participates in numerous cellular processes, including cell cycle progression, apoptosis, or DNA damage repair. PSMC6 belongs to the heterohexameric ring of AAA (ATPases associated with diverse cellular activities) proteins that unfolds ubiquitinated target proteins that are concurrently translocated into a proteolytic chamber and degraded into peptides. This chain is 26S proteasome regulatory subunit 10B (PSMC6), found in Homo sapiens (Human).